The following is a 141-amino-acid chain: Small ribosomal subunit protein uS12 (141 aa).

This sequence belongs to the universal ribosomal protein uS12 family. Part of the 30S ribosomal subunit.

Its function is as follows. With S4 and S5 plays an important role in translational accuracy. Located at the interface of the 30S and 50S subunits. The sequence is that of Small ribosomal subunit protein uS12 from Methanothermobacter thermautotrophicus (strain ATCC 29096 / DSM 1053 / JCM 10044 / NBRC 100330 / Delta H) (Methanobacterium thermoautotrophicum).